Reading from the N-terminus, the 718-residue chain is Phenylalanine--tRNA ligase beta subunit (718 aa).

Residues 40-153 (FLNVSKIKFG…KADLKQDPID (114 aa)) form the tRNA-binding domain. Residues 387 to 462 (DKKESFNFVW…RFYGYENLVF (76 aa)) enclose the B5 domain. The Mg(2+) site is built by D440, D446, E449, and E450.

This sequence belongs to the phenylalanyl-tRNA synthetase beta subunit family. Type 1 subfamily. As to quaternary structure, tetramer of two alpha and two beta subunits. It depends on Mg(2+) as a cofactor.

The protein localises to the cytoplasm. The enzyme catalyses tRNA(Phe) + L-phenylalanine + ATP = L-phenylalanyl-tRNA(Phe) + AMP + diphosphate + H(+). The chain is Phenylalanine--tRNA ligase beta subunit from Mycoplasmopsis pulmonis (strain UAB CTIP) (Mycoplasma pulmonis).